The sequence spans 302 residues: Probable protein S-acyltransferase 13 (302 aa).

2 helical membrane-spanning segments follow: residues 17–37 and 56–76; these read SIMILIVIGIIGFTYYAVVVV and VLAFFHFLLIMLLWSYFSVVV. Positions 116–166 constitute a DHHC domain; sequence RYCRKCNQYKPPRSHHCSVCGRCILKMDHHCVWVVNCVGANNYKSFLLFLF. Cys-146 serves as the catalytic S-palmitoyl cysteine intermediate. Helical transmembrane passes span 166-186 and 204-224; these read FYTFLETTVVAVSLLPIFLVF and SFVAFVLNIAFALSVLGFLIM.

It belongs to the DHHC palmitoyltransferase family.

The protein resides in the cell membrane. It is found in the cytoplasmic vesicle membrane. It carries out the reaction L-cysteinyl-[protein] + hexadecanoyl-CoA = S-hexadecanoyl-L-cysteinyl-[protein] + CoA. Functionally, palmitoyl acyltransferase. This is Probable protein S-acyltransferase 13 (PAT13) from Arabidopsis thaliana (Mouse-ear cress).